A 446-amino-acid chain; its full sequence is Vacuolar cation/proton exchanger 4 (446 aa).

Positions 1 to 16 (MSSISTESSSNLSLLE) are enriched in low complexity. Positions 1–33 (MSSISTESSSNLSLLENGGGGSDKPTAETSRRV) are disordered. At 1-69 (MSSISTESSS…MRRILTNLQE (69 aa)) the chain is on the cytoplasmic side. Residues 70-90 (VLLGTKLFILFPAVPLAVVAH) form a helical membrane-spanning segment. The Extracellular segment spans residues 91–96 (RYDCPR). A helical transmembrane segment spans residues 97–117 (AWVFALSLLGLTPLAERISFL). Over 118–128 (TEQIAFHTGPT) the chain is Cytoplasmic. Residues 129–149 (VGGLMNATCGNATEMIIAILA) traverse the membrane as a helical segment. Positions 138–173 (GNATEMIIAILAVGQRKMRIVKLSLLGSILSNLLFV) are cation selection. Over 150–162 (VGQRKMRIVKLSL) the chain is Extracellular. The helical transmembrane segment at 163–183 (LGSILSNLLFVLGTSLFLGGI) threads the bilayer. At 184–196 (SNLRKHQSFDPRQ) the chain is on the cytoplasmic side. The chain crosses the membrane as a helical span at residues 197-217 (GDMNSMLLYLALLCQTLPMIM). The Extracellular portion of the chain corresponds to 218–238 (RFTMEAEEYDGSDVVVLSRAS). Residues 239–259 (SFVMLIAYLAFLIFHLFSSHL) traverse the membrane as a helical segment. The Cytoplasmic portion of the chain corresponds to 260 to 285 (SPPPPPLPQREDVHDDDVSDKEEEGA). A helical membrane pass occupies residues 286–306 (VIGMWSAIFWLIIMTLLVALL). The Extracellular portion of the chain corresponds to 307 to 319 (SDYLVSTIQDAAD). Residues 320–340 (SWGLSVGFIGIILLPIVGNAA) traverse the membrane as a helical segment. A cation selection region spans residues 337 to 372 (GNAAEHAGAVIFAFRNKLDITLGIALGSATQIALFV). The Cytoplasmic segment spans residues 341–359 (EHAGAVIFAFRNKLDITLG). The chain crosses the membrane as a helical span at residues 360 to 380 (IALGSATQIALFVVPVTVLVA). Residues 381–388 (WTMGIEMD) are Extracellular-facing. Residues 389 to 409 (LNFNLLETACFALSILVTSLV) traverse the membrane as a helical segment. The Cytoplasmic segment spans residues 410 to 416 (LQDGTSN). The chain crosses the membrane as a helical span at residues 417-437 (YMKGLVLLLCYVVIAACFFVS). Over 438–446 (NSPSSKLLF) the chain is Extracellular.

Belongs to the Ca(2+):cation antiporter (CaCA) (TC 2.A.19) family. Cation/proton exchanger (CAX) subfamily. As to expression, expressed at low levels in all tissues.

It is found in the vacuole membrane. Functionally, vacuolar cation/proton exchanger (CAX). Translocates Ca(2+) and other metal ions into vacuoles using the proton gradient formed by H(+)-ATPase and H(+)-pyrophosphatase. Cation selectivity transport in tobacco root tonoplast vesicles is Cd(2+)&gt;Zn(2+)&gt;&gt;Ca(2+)&gt;&gt;&gt;Mn(2+). In Arabidopsis thaliana (Mouse-ear cress), this protein is Vacuolar cation/proton exchanger 4 (CAX4).